The chain runs to 309 residues: Porphobilinogen deaminase (309 aa).

Cysteine 242 bears the S-(dipyrrolylmethanemethyl)cysteine mark.

Belongs to the HMBS family. In terms of assembly, monomer. Dipyrromethane is required as a cofactor.

It carries out the reaction 4 porphobilinogen + H2O = hydroxymethylbilane + 4 NH4(+). It participates in porphyrin-containing compound metabolism; protoporphyrin-IX biosynthesis; coproporphyrinogen-III from 5-aminolevulinate: step 2/4. Functionally, tetrapolymerization of the monopyrrole PBG into the hydroxymethylbilane pre-uroporphyrinogen in several discrete steps. In Legionella pneumophila subsp. pneumophila (strain Philadelphia 1 / ATCC 33152 / DSM 7513), this protein is Porphobilinogen deaminase.